We begin with the raw amino-acid sequence, 993 residues long: Testis-expressed protein 13C (993 aa).

Disordered stretches follow at residues 281–381 (QEET…SLKK), 520–547 (DSKS…SHSL), and 894–959 (FSKS…PVNW). The span at 325–335 (GMTSQGDSSSH) shows a compositional bias: polar residues. Basic and acidic residues predominate over residues 353 to 364 (SRSHSLEKKPVM). Polar residues predominate over residues 944-957 (ESQQQKPASCSSPV). The RanBP2-type zinc finger occupies 955 to 984 (SPVNWACPWCNAMNFPRNKVCSKCKRVRMP).

Belongs to the TEX13 family.

The sequence is that of Testis-expressed protein 13C from Homo sapiens (Human).